The following is a 453-amino-acid chain: MRGFVPPTSSPDRGSKKVGRIVALDPPLESFQGYRMDLHTKGLNLLLSSGGHWSANRDADSVISRDDADYVVVIASSIGSYGFDRPIGDEYIRSDLTGQKHEACESRAWWKGQICAWSYSGRRHCEDVHIPFDFLRSDGLCYHIMAPLTFMKALDTHQADQLLSMHGSVPSAWSAYVTGRDYSQPTQYYTEEVADWRMLLREDDMASSYLLLVVTEGNAAELWTYDPYYTKTIGMEHGYSVRWYFIRDRNVGEAPIVLYARGGGVLKFIRLYKGRGTLTSLGARAMTTQEVTEFTCFRTHTYYFTGTKKYDCHPGGHRFDVPRWRSHINVSAHHLPVPPKCGCLKFPKLFKDYVIFDHPNVVGRAGEYVSLGPWSTGLQAVVTFKPQPRRHRVVLATYWDACSNTKRRVGIDVRTDRKNHMVWLKADKPVSREMWFVSEVDVVRVYVTWLSPE.

This is an uncharacterized protein from Galliformes (FAdV-1).